Reading from the N-terminus, the 340-residue chain is Armadillo repeat-containing protein 12 (340 aa).

The segment at 1–101 (MGKTIPRFLE…NITRCVYLLE (101 aa)) is interaction with TBC1D15. 3 ARM repeats span residues 100-139 (LEAE…AFSG), 179-218 (LPDY…YLAQ), and 278-318 (SLHE…SLQC). A disordered region spans residues 321–340 (DLGSRPSSCRPSHSCFKTGK). Residues 324-340 (SRPSSCRPSHSCFKTGK) are compositionally biased toward low complexity.

In terms of assembly, interacts with TBC1D15, TBC1D21, GK2 and IMMT. Interacts with VDAC2 and VDAC3 in a TBC1D21-dependent manner. Interacts (via ARM domains) with RBBP4. In terms of tissue distribution, testis-specific.

It is found in the nucleus. The protein resides in the mitochondrion outer membrane. In terms of biological role, essential for male fertility and sperm mitochondrial sheath formation. Required for proper mitochondrial elongation and coiling along the flagellum during the formation of the mitochondrial sheath. Facilitates the growth and aggressiveness of neuroblastoma cells. Increases the EZH2 activity and H3K27me3 levels in a RBBP4-dependent manner, and facilitates the enrichment of polycomb repressive complex 2 and H3K27me3 on gene promoters, resulting in transcriptional repression of tumor suppressors affecting the proliferation, invasion, and metastasis of tumor cells. The protein is Armadillo repeat-containing protein 12 (Armc12) of Mus musculus (Mouse).